A 293-amino-acid polypeptide reads, in one-letter code: 4-hydroxy-tetrahydrodipicolinate synthase (293 aa).

Residue threonine 45 participates in pyruvate binding. The active-site Proton donor/acceptor is tyrosine 133. Lysine 162 acts as the Schiff-base intermediate with substrate in catalysis. A pyruvate-binding site is contributed by isoleucine 204.

The protein belongs to the DapA family. Homotetramer; dimer of dimers.

The protein resides in the cytoplasm. It carries out the reaction L-aspartate 4-semialdehyde + pyruvate = (2S,4S)-4-hydroxy-2,3,4,5-tetrahydrodipicolinate + H2O + H(+). It participates in amino-acid biosynthesis; L-lysine biosynthesis via DAP pathway; (S)-tetrahydrodipicolinate from L-aspartate: step 3/4. Its function is as follows. Catalyzes the condensation of (S)-aspartate-beta-semialdehyde [(S)-ASA] and pyruvate to 4-hydroxy-tetrahydrodipicolinate (HTPA). This chain is 4-hydroxy-tetrahydrodipicolinate synthase, found in Brucella abortus biovar 1 (strain 9-941).